The sequence spans 228 residues: Protein K8.1 (228 aa).

Residues 1-26 (MSSTQIRTEIPVALLILCLCLVACHA) form the signal peptide. N-linked (GlcNAc...) asparagine; by host glycans are attached at residues asparagine 55, asparagine 60, asparagine 70, and asparagine 85. The disordered stretch occupies residues 77–113 (GSPSSEYPNVSVSVEDTSASGSGEDAIDESGSGEEER). The span at 78–97 (SPSSEYPNVSVSVEDTSASG) shows a compositional bias: polar residues. Residues 197–217 (LYILWAVGLLLGLVLILYLCV) form a helical membrane-spanning segment.

Its subcellular location is the host membrane. This chain is Protein K8.1 (K8.1), found in Human herpesvirus 8 type P (isolate GK18) (HHV-8).